We begin with the raw amino-acid sequence, 591 residues long: Aspartate--tRNA ligase (591 aa).

Glu173 serves as a coordination point for L-aspartate. Positions 197 to 200 (QLFK) are aspartate. Arg219 lines the L-aspartate pocket. Residues 219–221 (RDE) and Gln228 each bind ATP. His448 is an L-aspartate binding site. Glu482 lines the ATP pocket. Arg489 provides a ligand contact to L-aspartate. 534-537 (GLDR) lines the ATP pocket.

It belongs to the class-II aminoacyl-tRNA synthetase family. Type 1 subfamily. Homodimer.

The protein localises to the cytoplasm. It catalyses the reaction tRNA(Asp) + L-aspartate + ATP = L-aspartyl-tRNA(Asp) + AMP + diphosphate. Catalyzes the attachment of L-aspartate to tRNA(Asp) in a two-step reaction: L-aspartate is first activated by ATP to form Asp-AMP and then transferred to the acceptor end of tRNA(Asp). In Shewanella oneidensis (strain ATCC 700550 / JCM 31522 / CIP 106686 / LMG 19005 / NCIMB 14063 / MR-1), this protein is Aspartate--tRNA ligase.